Here is a 235-residue protein sequence, read N- to C-terminus: Small ribosomal subunit protein uS3 (235 aa).

The 69-residue stretch at 39–107 (VRKFLNKELA…PAQINIAEVK (69 aa)) folds into the KH type-2 domain. The segment at 215 to 235 (AQPEQQPADKPKKAPRGKGRK) is disordered.

The protein belongs to the universal ribosomal protein uS3 family. In terms of assembly, part of the 30S ribosomal subunit. Forms a tight complex with proteins S10 and S14.

Its function is as follows. Binds the lower part of the 30S subunit head. Binds mRNA in the 70S ribosome, positioning it for translation. The protein is Small ribosomal subunit protein uS3 of Pasteurella multocida (strain Pm70).